Consider the following 185-residue polypeptide: Ribose 1,5-bisphosphate phosphokinase PhnN (185 aa).

Position 10 to 17 (10 to 17 (GPSGSGKD)) interacts with ATP.

It belongs to the ribose 1,5-bisphosphokinase family.

The catalysed reaction is alpha-D-ribose 1,5-bisphosphate + ATP = 5-phospho-alpha-D-ribose 1-diphosphate + ADP. It functions in the pathway metabolic intermediate biosynthesis; 5-phospho-alpha-D-ribose 1-diphosphate biosynthesis; 5-phospho-alpha-D-ribose 1-diphosphate from D-ribose 5-phosphate (route II): step 3/3. Functionally, catalyzes the phosphorylation of ribose 1,5-bisphosphate to 5-phospho-D-ribosyl alpha-1-diphosphate (PRPP). Accepts ATP but not GTP as a phosphoryl donor, and uses ribose 1,5-bisphosphate but not ribose, ribose 1-phosphate, or ribose 5-phosphate as a phosphoryl acceptor. The sequence is that of Ribose 1,5-bisphosphate phosphokinase PhnN (phnN) from Escherichia coli (strain K12).